A 181-amino-acid polypeptide reads, in one-letter code: Transcriptional repressor NrdR (181 aa).

The segment at 3 to 34 (CLFCQHTDTRVIDSRVSEDGATIRRRRECEAC) is a zinc-finger region. One can recognise an ATP-cone domain in the interval 49–139 (PVIIKKDGGR…VYRSFQDVAD (91 aa)).

Belongs to the NrdR family. The cofactor is Zn(2+).

Its function is as follows. Negatively regulates transcription of bacterial ribonucleotide reductase nrd genes and operons by binding to NrdR-boxes. This chain is Transcriptional repressor NrdR, found in Xylella fastidiosa (strain M12).